The following is a 425-amino-acid chain: Elongation factor 1-alpha (425 aa).

One can recognise a tr-type G domain in the interval 5 to 221 (KPHINLAVIG…DELEVPDKPT (217 aa)). The G1 stretch occupies residues 14-21 (GHIDHGKS). 14–21 (GHIDHGKS) serves as a coordination point for GTP. Ser-21 is a binding site for Mg(2+). The segment at 70–74 (GITID) is G2. The interval 91–94 (DCPG) is G3. GTP-binding positions include 91–95 (DCPGH) and 146–149 (NKMD). The G4 stretch occupies residues 146–149 (NKMD). Residues 185-187 (SAF) form a G5 region.

Belongs to the TRAFAC class translation factor GTPase superfamily. Classic translation factor GTPase family. EF-Tu/EF-1A subfamily.

Its subcellular location is the cytoplasm. It carries out the reaction GTP + H2O = GDP + phosphate + H(+). In terms of biological role, GTP hydrolase that promotes the GTP-dependent binding of aminoacyl-tRNA to the A-site of ribosomes during protein biosynthesis. In Methanospirillum hungatei JF-1 (strain ATCC 27890 / DSM 864 / NBRC 100397 / JF-1), this protein is Elongation factor 1-alpha.